A 599-amino-acid polypeptide reads, in one-letter code: Aspartate--tRNA(Asp/Asn) ligase (599 aa).

E180 is a binding site for L-aspartate. Positions 204-207 are aspartate; sequence QLLK. R226 contacts L-aspartate. ATP is bound by residues 226–228 and Q235; that span reads RDE. Residue H457 coordinates L-aspartate. E491 provides a ligand contact to ATP. Position 498 (R498) interacts with L-aspartate. 543–546 serves as a coordination point for ATP; the sequence is GWDR. A disordered region spans residues 565 to 599; it reads KAGGGRDPLTGAPAPISDEQRAETGVDYDPDADEN. Acidic residues predominate over residues 590 to 599; the sequence is VDYDPDADEN.

The protein belongs to the class-II aminoacyl-tRNA synthetase family. Type 1 subfamily. In terms of assembly, homodimer.

Its subcellular location is the cytoplasm. The enzyme catalyses tRNA(Asx) + L-aspartate + ATP = L-aspartyl-tRNA(Asx) + AMP + diphosphate. Its function is as follows. Aspartyl-tRNA synthetase with relaxed tRNA specificity since it is able to aspartylate not only its cognate tRNA(Asp) but also tRNA(Asn). Reaction proceeds in two steps: L-aspartate is first activated by ATP to form Asp-AMP and then transferred to the acceptor end of tRNA(Asp/Asn). This is Aspartate--tRNA(Asp/Asn) ligase from Bifidobacterium longum (strain DJO10A).